The chain runs to 309 residues: Cytochrome c biogenesis protein CcsA (309 aa).

8 helical membrane-spanning segments follow: residues 18 to 38 (LGLL…GAVF), 43 to 63 (SFAV…QLLF), 73 to 93 (ISNL…GQLL), 102 to 122 (IIPS…CFVL), 148 to 168 (VMLS…VLFI), 216 to 236 (SILI…VWAN), 250 to 267 (TWAF…HMRI), and 279 to 299 (LAST…FLGI).

Belongs to the CcmF/CycK/Ccl1/NrfE/CcsA family. As to quaternary structure, may interact with ccs1.

The protein resides in the cellular thylakoid membrane. Required during biogenesis of c-type cytochromes (cytochrome c6 and cytochrome f) at the step of heme attachment. This chain is Cytochrome c biogenesis protein CcsA, found in Prochlorococcus marinus (strain MIT 9301).